Here is a 200-residue protein sequence, read N- to C-terminus: Large ribosomal subunit protein uL4 (200 aa).

A disordered region spans residues 43-71; the sequence is RAQKTRAEVSGSGKKPWRQKGTGRARSGD.

This sequence belongs to the universal ribosomal protein uL4 family. In terms of assembly, part of the 50S ribosomal subunit.

Its function is as follows. One of the primary rRNA binding proteins, this protein initially binds near the 5'-end of the 23S rRNA. It is important during the early stages of 50S assembly. It makes multiple contacts with different domains of the 23S rRNA in the assembled 50S subunit and ribosome. Functionally, forms part of the polypeptide exit tunnel. The protein is Large ribosomal subunit protein uL4 of Pasteurella multocida (strain Pm70).